The following is a 448-amino-acid chain: Glutamate--tRNA ligase 1 (448 aa).

The 'HIGH' region signature appears at 9–19 (PSPTGKLHIGN). The short motif at 240–244 (KISKR) is the 'KMSKS' region element. Position 243 (K243) interacts with ATP.

Belongs to the class-I aminoacyl-tRNA synthetase family. Glutamate--tRNA ligase type 1 subfamily. As to quaternary structure, monomer.

The protein resides in the cytoplasm. It carries out the reaction tRNA(Glu) + L-glutamate + ATP = L-glutamyl-tRNA(Glu) + AMP + diphosphate. Catalyzes the attachment of glutamate to tRNA(Glu) in a two-step reaction: glutamate is first activated by ATP to form Glu-AMP and then transferred to the acceptor end of tRNA(Glu). The chain is Glutamate--tRNA ligase 1 from Orientia tsutsugamushi (strain Ikeda) (Rickettsia tsutsugamushi).